A 194-amino-acid polypeptide reads, in one-letter code: Adenylate kinase isoenzyme 1 (194 aa).

Methionine 1 carries the post-translational modification N-acetylmethionine. Position 18-23 (18-23) interacts with ATP; that stretch reads GSGKGT. Serine 38 is modified (phosphoserine). Positions 38 to 67 are NMP; it reads STGDLLRAEVSSGSARGKMLSEIMEKGQLV. Residues threonine 39, arginine 44, 65–67, 94–97, and glutamine 101 contribute to the AMP site; these read QLV and GYPR. Residues 131-141 form an LID region; it reads KRGETSGRVDD. Arginine 132 provides a ligand contact to ATP. Arginine 138 and arginine 149 together coordinate AMP. Residue glycine 177 coordinates ATP.

It belongs to the adenylate kinase family. AK1 subfamily. Monomer. Mg(2+) is required as a cofactor.

It localises to the cytoplasm. It carries out the reaction a ribonucleoside 5'-phosphate + ATP = a ribonucleoside 5'-diphosphate + ADP. The catalysed reaction is AMP + ATP = 2 ADP. The enzyme catalyses dAMP + ATP = dADP + ADP. It catalyses the reaction dATP + AMP = dADP + ADP. It carries out the reaction dAMP + dATP = 2 dADP. The catalysed reaction is a 2'-deoxyribonucleoside 5'-diphosphate + ATP = a 2'-deoxyribonucleoside 5'-triphosphate + ADP. The enzyme catalyses a ribonucleoside 5'-diphosphate + ATP = a ribonucleoside 5'-triphosphate + ADP. It catalyses the reaction CDP + GTP = CTP + GDP. It carries out the reaction GDP + ATP = GTP + ADP. The catalysed reaction is UDP + ATP = UTP + ADP. The enzyme catalyses GTP + UDP = UTP + GDP. It catalyses the reaction dTDP + GTP = dTTP + GDP. It carries out the reaction dCDP + GTP = dCTP + GDP. The catalysed reaction is dGDP + ATP = dGTP + ADP. The enzyme catalyses dADP + GTP = dATP + GDP. It catalyses the reaction thiamine diphosphate + ADP = thiamine triphosphate + AMP. In terms of biological role, catalyzes the reversible transfer of the terminal phosphate group between ATP and AMP. Also displays broad nucleoside diphosphate kinase activity. Plays an important role in cellular energy homeostasis and in adenine nucleotide metabolism. Also catalyzes at a very low rate the synthesis of thiamine triphosphate (ThTP) from thiamine diphosphate (ThDP) and ADP. The chain is Adenylate kinase isoenzyme 1 from Sus scrofa (Pig).